The primary structure comprises 354 residues: Dihydroorotate dehydrogenase (quinone) (354 aa).

FMN-binding positions include 70–74 (AGFDK) and T94. K74 lines the substrate pocket. Substrate is bound at residue 119–123 (NAMGF). 2 residues coordinate FMN: N148 and N181. N181 is a binding site for substrate. S184 acts as the Nucleophile in catalysis. N186 is a substrate binding site. Residues K217 and T245 each coordinate FMN. A substrate-binding site is contributed by 246 to 247 (NT). FMN-binding positions include G265, G294, and 315–316 (YS).

It belongs to the dihydroorotate dehydrogenase family. Type 2 subfamily. Monomer. Requires FMN as cofactor.

It localises to the cell membrane. It catalyses the reaction (S)-dihydroorotate + a quinone = orotate + a quinol. It functions in the pathway pyrimidine metabolism; UMP biosynthesis via de novo pathway; orotate from (S)-dihydroorotate (quinone route): step 1/1. Functionally, catalyzes the conversion of dihydroorotate to orotate with quinone as electron acceptor. The polypeptide is Dihydroorotate dehydrogenase (quinone) (Sulfurovum sp. (strain NBC37-1)).